The chain runs to 225 residues: 3-demethoxyubiquinol 3-hydroxylase (225 aa).

The span at 1–11 shows a compositional bias: polar residues; sequence MSVASTSSGFT. The interval 1-20 is disordered; sequence MSVASTSSGFTPFSRRRGPL. Glutamate 74, glutamate 104, histidine 107, glutamate 156, glutamate 188, and histidine 191 together coordinate Fe cation. The segment at 181–203 is disordered; it reads VSQMKDDEAQHRASAERAGGVPL. The segment covering 184–195 has biased composition (basic and acidic residues); it reads MKDDEAQHRASA.

This sequence belongs to the COQ7 family. The cofactor is Fe cation.

It is found in the cell membrane. The enzyme catalyses a 5-methoxy-2-methyl-3-(all-trans-polyprenyl)benzene-1,4-diol + AH2 + O2 = a 3-demethylubiquinol + A + H2O. Its pathway is cofactor biosynthesis; ubiquinone biosynthesis. Catalyzes the hydroxylation of 2-nonaprenyl-3-methyl-6-methoxy-1,4-benzoquinol during ubiquinone biosynthesis. The sequence is that of 3-demethoxyubiquinol 3-hydroxylase from Bordetella petrii (strain ATCC BAA-461 / DSM 12804 / CCUG 43448).